A 612-amino-acid polypeptide reads, in one-letter code: Dihydroxy-acid dehydratase (612 aa).

Asp-81 contributes to the Mg(2+) binding site. Residue Cys-122 participates in [2Fe-2S] cluster binding. Mg(2+)-binding residues include Asp-123 and Lys-124. Lys-124 bears the N6-carboxylysine mark. Cys-195 contributes to the [2Fe-2S] cluster binding site. Residue Glu-491 coordinates Mg(2+). Catalysis depends on Ser-517, which acts as the Proton acceptor.

This sequence belongs to the IlvD/Edd family. In terms of assembly, homodimer. The cofactor is [2Fe-2S] cluster. Mg(2+) serves as cofactor.

It carries out the reaction (2R)-2,3-dihydroxy-3-methylbutanoate = 3-methyl-2-oxobutanoate + H2O. The catalysed reaction is (2R,3R)-2,3-dihydroxy-3-methylpentanoate = (S)-3-methyl-2-oxopentanoate + H2O. It participates in amino-acid biosynthesis; L-isoleucine biosynthesis; L-isoleucine from 2-oxobutanoate: step 3/4. The protein operates within amino-acid biosynthesis; L-valine biosynthesis; L-valine from pyruvate: step 3/4. Its function is as follows. Functions in the biosynthesis of branched-chain amino acids. Catalyzes the dehydration of (2R,3R)-2,3-dihydroxy-3-methylpentanoate (2,3-dihydroxy-3-methylvalerate) into 2-oxo-3-methylpentanoate (2-oxo-3-methylvalerate) and of (2R)-2,3-dihydroxy-3-methylbutanoate (2,3-dihydroxyisovalerate) into 2-oxo-3-methylbutanoate (2-oxoisovalerate), the penultimate precursor to L-isoleucine and L-valine, respectively. The protein is Dihydroxy-acid dehydratase of Buchnera aphidicola subsp. Baizongia pistaciae (strain Bp).